The chain runs to 386 residues: MVEMSTGMKNLTRTLESMDFLKMDRRTFMKAVSALGATAFLGTYQTEIVNALEFAETKLIWIHGSECTGCSESLLNGGNPDVAQALTKLNVNLAYHETLCMQQGIWNDGELVNTSELNSEILLEDLYKEGNYILVVEGSIPNGPDGSGRYLVIGNKTFKETLGEAAENANAIVAVGACACWGGITSADSDIEKETDYRGVAFKKTDASKGMLKELGIDKPVINIPGCPAHPDWILLTLGAVILGKIKIPDDLPAALDQYGRPKLFFPPDHTVHENCPRRGYYDRGEFDEEVGGEKCLWKLGCKAPYAHADCGIRRWNGSVSMCTQAGGPCINCVDPGFPDASRPLYVEAEDKGIVGANIDTVAKVAVGAAAVAAGVHAVRRMGKGE.

The segment at residues 1-51 (MVEMSTGMKNLTRTLESMDFLKMDRRTFMKAVSALGATAFLGTYQTEIVNA) is a signal peptide (tat-type signal). Residues C67, C70, C178, C227, H273, C276, C296, and C302 each coordinate [4Fe-4S] cluster. C311, C330, and C333 together coordinate [3Fe-4S] cluster.

This sequence belongs to the [NiFe]/[NiFeSe] hydrogenase small subunit family. In terms of assembly, composed of a large subunit (VhtA), a small subunit (VhtG) and a cytochrome subunit (VhtC). [4Fe-4S] cluster serves as cofactor. It depends on [3Fe-4S] cluster as a cofactor. Post-translationally, predicted to be exported by the Tat system. The position of the signal peptide cleavage has not been experimentally proven.

It is found in the cell membrane. It carries out the reaction methanophenazine + H2 = dihydromethanophenazine. In terms of biological role, part of the F420 non-reducing hydrogenase II complex that catalyzes the reduction of methanophenazine to dihydromethanophenazine. The protein is F420 non-reducing hydrogenase II small subunit of Methanosarcina mazei (strain ATCC BAA-159 / DSM 3647 / Goe1 / Go1 / JCM 11833 / OCM 88) (Methanosarcina frisia).